The primary structure comprises 97 residues: Aspartyl/glutamyl-tRNA(Asn/Gln) amidotransferase subunit C (97 aa).

It belongs to the GatC family. Heterotrimer of A, B and C subunits.

It catalyses the reaction L-glutamyl-tRNA(Gln) + L-glutamine + ATP + H2O = L-glutaminyl-tRNA(Gln) + L-glutamate + ADP + phosphate + H(+). The catalysed reaction is L-aspartyl-tRNA(Asn) + L-glutamine + ATP + H2O = L-asparaginyl-tRNA(Asn) + L-glutamate + ADP + phosphate + 2 H(+). Allows the formation of correctly charged Asn-tRNA(Asn) or Gln-tRNA(Gln) through the transamidation of misacylated Asp-tRNA(Asn) or Glu-tRNA(Gln) in organisms which lack either or both of asparaginyl-tRNA or glutaminyl-tRNA synthetases. The reaction takes place in the presence of glutamine and ATP through an activated phospho-Asp-tRNA(Asn) or phospho-Glu-tRNA(Gln). In Synechococcus sp. (strain JA-3-3Ab) (Cyanobacteria bacterium Yellowstone A-Prime), this protein is Aspartyl/glutamyl-tRNA(Asn/Gln) amidotransferase subunit C.